Reading from the N-terminus, the 427-residue chain is uncharacterized protein (427 aa).

This sequence belongs to the MG032/MG096/MG288 family.

This is an uncharacterized protein from Mycoplasma pneumoniae (strain ATCC 29342 / M129 / Subtype 1) (Mycoplasmoides pneumoniae).